The primary structure comprises 183 residues: Adenine phosphoribosyltransferase (183 aa).

Belongs to the purine/pyrimidine phosphoribosyltransferase family. Homodimer.

The protein localises to the cytoplasm. It catalyses the reaction AMP + diphosphate = 5-phospho-alpha-D-ribose 1-diphosphate + adenine. The protein operates within purine metabolism; AMP biosynthesis via salvage pathway; AMP from adenine: step 1/1. In terms of biological role, catalyzes a salvage reaction resulting in the formation of AMP, that is energically less costly than de novo synthesis. In Edwardsiella ictaluri (strain 93-146), this protein is Adenine phosphoribosyltransferase.